A 49-amino-acid polypeptide reads, in one-letter code: Large ribosomal subunit protein bL33 (49 aa).

It belongs to the bacterial ribosomal protein bL33 family.

In Clostridium botulinum (strain Alaska E43 / Type E3), this protein is Large ribosomal subunit protein bL33.